The chain runs to 448 residues: Na(+)-translocating NADH-quinone reductase subunit A (448 aa).

It belongs to the NqrA family. Composed of six subunits; NqrA, NqrB, NqrC, NqrD, NqrE and NqrF.

The enzyme catalyses a ubiquinone + n Na(+)(in) + NADH + H(+) = a ubiquinol + n Na(+)(out) + NAD(+). NQR complex catalyzes the reduction of ubiquinone-1 to ubiquinol by two successive reactions, coupled with the transport of Na(+) ions from the cytoplasm to the periplasm. NqrA to NqrE are probably involved in the second step, the conversion of ubisemiquinone to ubiquinol. This chain is Na(+)-translocating NADH-quinone reductase subunit A, found in Alcanivorax borkumensis (strain ATCC 700651 / DSM 11573 / NCIMB 13689 / SK2).